The sequence spans 223 residues: RNA pyrophosphohydrolase (223 aa).

The region spanning 6 to 149 is the Nudix hydrolase domain; sequence GFRPNVGIIL…KRGVYEMALT (144 aa). The Nudix box motif lies at 38 to 59; the sequence is GGIDRGESPEQAMFRELHEEVG. Positions 175-223 are disordered; the sequence is ERHMPDGGAPAGLDLPPGGSFDPHPDITSASDDPSPPPHNKAPFLPSQR. Low complexity predominate over residues 180–193; that stretch reads DGGAPAGLDLPPGG.

This sequence belongs to the Nudix hydrolase family. RppH subfamily. A divalent metal cation is required as a cofactor.

Functionally, accelerates the degradation of transcripts by removing pyrophosphate from the 5'-end of triphosphorylated RNA, leading to a more labile monophosphorylated state that can stimulate subsequent ribonuclease cleavage. This chain is RNA pyrophosphohydrolase, found in Variovorax paradoxus (strain S110).